The chain runs to 360 residues: Pyrimidine monooxygenase RutA (360 aa).

FMN-binding positions include 49-50 (IK), asparagine 115, glutamate 124, 140-141 (RY), and serine 190.

Belongs to the NtaA/SnaA/DszA monooxygenase family. RutA subfamily.

The catalysed reaction is uracil + FMNH2 + NADH + O2 = (Z)-3-ureidoacrylate + FMN + NAD(+) + H2O + H(+). It carries out the reaction thymine + FMNH2 + NADH + O2 = (Z)-2-methylureidoacrylate + FMN + NAD(+) + H2O + H(+). In terms of biological role, catalyzes the pyrimidine ring opening between N-3 and C-4 by an unusual flavin hydroperoxide-catalyzed mechanism, adding oxygen atoms in the process to yield ureidoacrylate peracid, that immediately reacts with FMN forming ureidoacrylate and FMN-N(5)-oxide. The FMN-N(5)-oxide reacts spontaneously with NADH to produce FMN. Requires the flavin reductase RutF to regenerate FMN in vivo. The polypeptide is Pyrimidine monooxygenase RutA (Pseudomonas savastanoi pv. phaseolicola (strain 1448A / Race 6) (Pseudomonas syringae pv. phaseolicola (strain 1448A / Race 6))).